Consider the following 141-residue polypeptide: ATP synthase epsilon chain (141 aa).

Belongs to the ATPase epsilon chain family. F-type ATPases have 2 components, CF(1) - the catalytic core - and CF(0) - the membrane proton channel. CF(1) has five subunits: alpha(3), beta(3), gamma(1), delta(1), epsilon(1). CF(0) has three main subunits: a, b and c.

It localises to the cell membrane. Produces ATP from ADP in the presence of a proton gradient across the membrane. In Mycoplasmopsis pulmonis (strain UAB CTIP) (Mycoplasma pulmonis), this protein is ATP synthase epsilon chain (atpC).